Here is a 316-residue protein sequence, read N- to C-terminus: HTH-type transcriptional regulator PecT (316 aa).

The HTH lysR-type domain occupies 11–68 (LDLDLLRTFVAVADLNTFAAAAVAVCRTQSAVSQQMQRLEQLIGKELFARHGRNKLLT). The segment at residues 28-47 (FAAAAVAVCRTQSAVSQQMQ) is a DNA-binding region (H-T-H motif). The interval 293–316 (LPVSTGTESELREPPTDESLKDIT) is disordered. Over residues 301–316 (SELREPPTDESLKDIT) the composition is skewed to basic and acidic residues.

It belongs to the LysR transcriptional regulatory family.

Its function is as follows. Regulates pectinase gene expression. The protein is HTH-type transcriptional regulator PecT (pecT) of Dickeya dadantii (strain 3937) (Erwinia chrysanthemi (strain 3937)).